A 178-amino-acid polypeptide reads, in one-letter code: Large ribosomal subunit protein uL6 (178 aa).

This sequence belongs to the universal ribosomal protein uL6 family. In terms of assembly, part of the 50S ribosomal subunit.

This protein binds to the 23S rRNA, and is important in its secondary structure. It is located near the subunit interface in the base of the L7/L12 stalk, and near the tRNA binding site of the peptidyltransferase center. This chain is Large ribosomal subunit protein uL6, found in Aliarcobacter butzleri (strain RM4018) (Arcobacter butzleri).